A 798-amino-acid chain; its full sequence is Nuclear intron maturase 4, mitochondrial (798 aa).

Residues Met1–Tyr16 constitute a mitochondrion transit peptide. The intron maturase type-2 stretch occupies residues Val578–Glu665. The THAP-type zinc finger occupies Cys729–His778.

This sequence belongs to the plant nuclear intron maturase (nMat) family.

The protein localises to the mitochondrion. Its subcellular location is the plastid. The protein resides in the chloroplast. Nuclear-encoded maturase required for splicing of group-II introns in mitochondria. Involved in NAD1 pre-mRNA processing and maturation of introns 1, 3 and 4. Necessary for mitochondrial biogenesis during early developmental stages. Essential for respiratory holocomplex I biogenesis in mitochondria. The sequence is that of Nuclear intron maturase 4, mitochondrial from Arabidopsis thaliana (Mouse-ear cress).